Reading from the N-terminus, the 117-residue chain is UPF0125 protein VV0820 (117 aa).

The interval 90 to 117 (RKRAEQAKESGAADPVTGGKPSPLRKAD) is disordered.

The protein belongs to the UPF0125 (RnfH) family.

The polypeptide is UPF0125 protein VV0820 (Vibrio vulnificus (strain YJ016)).